The primary structure comprises 279 residues: Pantothenate synthetase (279 aa).

An ATP-binding site is contributed by 26 to 33; the sequence is MGGLHEGH. Histidine 33 (proton donor) is an active-site residue. Glutamine 57 lines the (R)-pantoate pocket. Glutamine 57 contributes to the beta-alanine binding site. Position 143–146 (143–146) interacts with ATP; it reads GKKD. Glutamine 149 contacts (R)-pantoate. ATP contacts are provided by residues valine 172 and 180–183; that span reads LSSR.

Belongs to the pantothenate synthetase family. As to quaternary structure, homodimer.

It is found in the cytoplasm. It carries out the reaction (R)-pantoate + beta-alanine + ATP = (R)-pantothenate + AMP + diphosphate + H(+). The protein operates within cofactor biosynthesis; (R)-pantothenate biosynthesis; (R)-pantothenate from (R)-pantoate and beta-alanine: step 1/1. Its function is as follows. Catalyzes the condensation of pantoate with beta-alanine in an ATP-dependent reaction via a pantoyl-adenylate intermediate. The sequence is that of Pantothenate synthetase from Nitrosospira multiformis (strain ATCC 25196 / NCIMB 11849 / C 71).